Reading from the N-terminus, the 926-residue chain is Protein O-mannosyl-transferase Tmtc3 (926 aa).

Residues M1 to A26 are disordered. Over M1–E36 the chain is Cytoplasmic. A helical membrane pass occupies residues F37–V57. At F58 to A114 the chain is on the extracellular side. A helical transmembrane segment spans residues L115 to W135. The Cytoplasmic segment spans residues R136–A169. A helical transmembrane segment spans residues F170–V190. The Extracellular segment spans residues G191–R192. Residues A193–G213 traverse the membrane as a helical segment. The Cytoplasmic portion of the chain corresponds to D214 to N222. 2 helical membrane-spanning segments follow: residues W223–L239 and C240–V259. Topologically, residues H260–R303 are cytoplasmic. Residues L304–S324 form a helical membrane-spanning segment. Over Q325–Q345 the chain is Extracellular. The helical transmembrane segment at L346–C366 threads the bilayer. Residues C367–R384 are Cytoplasmic-facing. A helical membrane pass occupies residues N385–T405. Residues R406–G419 lie on the Extracellular side of the membrane. A helical membrane pass occupies residues W420–A440. Topologically, residues E441–R442 are cytoplasmic. The chain crosses the membrane as a helical span at residues I443–Q463. Residues R464–S926 lie on the Extracellular side of the membrane. TPR repeat units follow at residues A514 to D547, I548 to A581, L596 to Y630, V631 to N664, A665 to H698, E736 to F769, R770 to H803, K805 to N838, and T839 to E872. N-linked (GlcNAc...) asparagine glycosylation is found at N609 and N645.

The protein belongs to the TMTC family.

It localises to the membrane. The protein resides in the endoplasmic reticulum. It catalyses the reaction a di-trans,poly-cis-dolichyl beta-D-mannosyl phosphate + L-seryl-[protein] = 3-O-(alpha-D-mannosyl)-L-seryl-[protein] + a di-trans,poly-cis-dolichyl phosphate + H(+). The enzyme catalyses a di-trans,poly-cis-dolichyl beta-D-mannosyl phosphate + L-threonyl-[protein] = 3-O-(alpha-D-mannosyl)-L-threonyl-[protein] + a di-trans,poly-cis-dolichyl phosphate + H(+). The protein operates within protein modification; protein glycosylation. In terms of biological role, transfers mannosyl residues to the hydroxyl group of serine or threonine residues. This is Protein O-mannosyl-transferase Tmtc3 from Drosophila melanogaster (Fruit fly).